We begin with the raw amino-acid sequence, 45 residues long: uncharacterized protein (45 aa).

A helical transmembrane segment spans residues 5–25 (IFFIFALSGILAACTVGGGVS).

It is found in the membrane. This is an uncharacterized protein from Haemophilus influenzae (strain ATCC 51907 / DSM 11121 / KW20 / Rd).